The primary structure comprises 718 residues: Sodium/myo-inositol cotransporter (718 aa).

Topologically, residues 1-9 are extracellular; the sequence is MRAVLDTAD. Residues 10–29 traverse the membrane as a helical segment; sequence IAIVALYFILVMCIGFFAMW. At 30-38 the chain is on the cytoplasmic side; it reads KSNRSTVSG. A helical transmembrane segment spans residues 39 to 57; the sequence is YFLAGRSMTWVAIGASLFV. The Extracellular segment spans residues 58-86; that stretch reads SNIGSEHFIGLAGSGAASGFAVGAWEFNA. Residues 87–110 traverse the membrane as a helical segment; that stretch reads LLLLQLLGWVFIPIYIRSGVYTMP. The Cytoplasmic segment spans residues 111–123; the sequence is EYLSKRFGGHRIQ. The chain crosses the membrane as a helical span at residues 124–144; sequence VYFAALSLILYIFTKLSVDLY. The Extracellular segment spans residues 145-157; sequence SGALFIQESLGWN. The chain crosses the membrane as a helical span at residues 158 to 183; sequence LYVSVILLIGMTALLTVTGGLVAVIY. The Cytoplasmic portion of the chain corresponds to 184–186; the sequence is TDT. Residues 187–205 form a helical membrane-spanning segment; sequence LQALLMIIGALTLMIISIM. Residues 206–303 are Extracellular-facing; it reads EIGGFEEVKR…HAKGSTLMAG (98 aa). Asparagine 232 is a glycosylation site (N-linked (GlcNAc...) asparagine). The chain crosses the membrane as a helical span at residues 304–324; the sequence is FLKLLPMFIIVVPGMISRILF. Residues 325 to 353 are Cytoplasmic-facing; that stretch reads TDDIACINPEHCMLVCGSRAGCSNIAYPR. The chain crosses the membrane as a helical span at residues 354-376; sequence LVMKLVPVGLRGLMMAVMIAALM. Residues 377–406 are Extracellular-facing; the sequence is SDLDSIFNSASTIFTLDVYKLIRKSASSRE. The helical transmembrane segment at 407 to 430 threads the bilayer; sequence LMIVGRIFVAFMVVISIAWVPIIV. Residues 431-443 lie on the Cytoplasmic side of the membrane; it reads EMQGGQMYLYIQE. Residues 444–462 form a helical membrane-spanning segment; it reads VADYLTPPVAALFLLAIFW. At 463–510 the chain is on the extracellular side; that stretch reads KRCNEQGAFYGGMAGFVLGAVRLILAFAYRAPECDQPDNRPGFIKDIH. Residues 511-532 form a helical membrane-spanning segment; sequence YMYVATGLFWVTGLITVIVSLL. At 533–695 the chain is on the cytoplasmic side; sequence TPPPTKEQIR…QMLEETRQVK (163 aa). Phosphoserine is present on residues serine 594 and serine 632. The helical transmembrane segment at 696 to 716 threads the bilayer; sequence VILNIGLFAVCSLGIFMFVYF. Topologically, residues 717–718 are extracellular; sequence SL.

It belongs to the sodium:solute symporter (SSF) (TC 2.A.21) family. As to quaternary structure, interacts with KCNQ2 (via the pore module). Interacts with KCNQ1; this interaction is direct. Forms coregulatory complexes with ion channels KCNQ2-KCNQ3 and KCNQ1-KCNE2.

The protein resides in the apical cell membrane. It is found in the basolateral cell membrane. The catalysed reaction is myo-inositol(out) + 2 Na(+)(out) = myo-inositol(in) + 2 Na(+)(in). The enzyme catalyses scyllo-inositol(out) + 2 Na(+)(out) = scyllo-inositol(in) + 2 Na(+)(in). In terms of biological role, electrogenic Na(+)-coupled sugar symporter that actively transports myo-inositol and its stereoisomer scyllo-inositol across the plasma membrane, with a Na(+) to sugar coupling ratio of 2:1. Maintains myo-inositol concentration gradient that defines cell volume and fluid balance during osmotic stress, in particular in the fetoplacental unit and central nervous system. Forms coregulatory complexes with voltage-gated K(+) ion channels, allosterically altering ion selectivity, voltage dependence and gating kinetics of the channel. In turn, K(+) efflux through the channel forms a local electrical gradient that modulates electrogenic Na(+)-coupled myo-inositol influx through the transporter. Associates with KCNQ1-KCNE2 channel in the apical membrane of choroid plexus epithelium and regulates the myo-inositol gradient between blood and cerebrospinal fluid with an impact on neuron excitability. Associates with KCNQ2-KCNQ3 channel altering ion selectivity, increasing Na(+) and Cs(+) permeation relative to K(+) permeation. Provides myo-inositol precursor for biosynthesis of phosphoinositides such as PI(4,5)P2, thus indirectly affecting the activity of phosphoinositide-dependent ion channels and Ca(2+) signaling upon osmotic stress. The chain is Sodium/myo-inositol cotransporter from Homo sapiens (Human).